Reading from the N-terminus, the 110-residue chain is Putative UPF0377 protein YKL223W (110 aa).

It belongs to the UPF0377 family.

This Saccharomyces cerevisiae (strain ATCC 204508 / S288c) (Baker's yeast) protein is Putative UPF0377 protein YKL223W.